Here is a 1064-residue protein sequence, read N- to C-terminus: Lysine-specific demethylase 4A (1064 aa).

N-acetylalanine is present on alanine 2. One can recognise a JmjN domain in the interval 14 to 56; that stretch reads IMTFYPTMEEFRNFSRYIAYIESQGAHRAGLAKVVPPKEWKPR. Tyrosine 132 contributes to the 2-oxoglutarate binding site. A JmjC domain is found at 142–308; that stretch reads EQHVDEWNIG…YGKQAVLCSC (167 aa). Residues histidine 188 and glutamate 190 each coordinate Fe cation. 2-oxoglutarate-binding residues include asparagine 198 and lysine 206. 2 residues coordinate Zn(2+): cysteine 234 and histidine 240. Lysine 241 lines the 2-oxoglutarate pocket. A Fe cation-binding site is contributed by histidine 276. Zn(2+)-binding residues include cysteine 306 and cysteine 308. 5 disordered regions span residues 354-384, 434-489, 502-537, 549-573, and 590-643; these read LKDS…EEGD, LAPV…LDLS, SGSK…QGQE, RGDG…SISE, and NKKT…LSQL. Residues 368-382 are compositionally biased toward acidic residues; the sequence is ECPEEDVEAADQGEE. A compositionally biased stretch (basic and acidic residues) spans 460 to 472; sequence TEVKFEELKNVKL. The span at 473-482 shows a compositional bias: acidic residues; sequence EEEDEEDEPE. Low complexity predominate over residues 509 to 525; it reads SSSLGSTSSQDSVSSDS. Position 523 is a phosphoserine (serine 523). The segment covering 528 to 537 has biased composition (polar residues); sequence AESVSCQGQE. Positions 593–608 are enriched in basic residues; the sequence is TKGRRQPLSKLPRHHP. The segment at 597–638 is interaction with NCOR1; it reads RQPLSKLPRHHPLVLQECGSDDETSEQLTPEEEAEETEAWAK. Residues 615–634 are compositionally biased toward acidic residues; it reads GSDDETSEQLTPEEEAEETE. A PHD-type 1 zinc finger spans residues 709 to 767; it reads MCFTTTGCSTDINLSTPYLEEDGTSMLVSCKKCSVRVHASCYGVPPAKASEEWMCSRCS. A C2HC pre-PHD-type zinc finger spans residues 772–805; it reads EEDCCLCSLRGGALQRANDDRWVHVSCAVAILEA. A PHD-type 2 zinc finger spans residues 828–885; the sequence is LKCVFCKKRRKRNAGCCVQCSHGRCPTAFHVSCAQAAGVMMQPDDWPFVVFITCFRHK. 2 consecutive Tudor domains span residues 897–954 and 955–1011; these read LSIT…CLQL and GPPA…EELP.

This sequence belongs to the JHDM3 histone demethylase family. As to quaternary structure, interacts with histone deacetylase proteins HDAC1, HDAC2 and HDAC3. Interacts with RB and NCOR1. Interacts with VRK1. Fe(2+) is required as a cofactor. Post-translationally, ubiquitinated by RNF8 and RNF168, leading to its degradation. Degradation promotes accessibility of H4K20me2 mark for DNA repair protein TP53BP1, which is then recruited. Also ubiquitinated by the SCF(FBXO22) complex; leading to proteasomal degradation. Widely expressed.

The protein localises to the nucleus. It catalyses the reaction N(6),N(6),N(6)-trimethyl-L-lysyl(9)-[histone H3] + 2 2-oxoglutarate + 2 O2 = N(6)-methyl-L-lysyl(9)-[histone H3] + 2 formaldehyde + 2 succinate + 2 CO2. The catalysed reaction is N(6),N(6),N(6)-trimethyl-L-lysyl(36)-[histone H3] + 2 2-oxoglutarate + 2 O2 = N(6)-methyl-L-lysyl(36)-[histone H3] + 2 formaldehyde + 2 succinate + 2 CO2. Histone demethylase that specifically demethylates 'Lys-9' and 'Lys-36' residues of histone H3, thereby playing a central role in histone code. Does not demethylate histone H3 'Lys-4', H3 'Lys-27' nor H4 'Lys-20'. Demethylates trimethylated H3 'Lys-9' and H3 'Lys-36' residue, while it has no activity on mono- and dimethylated residues. Demethylation of Lys residue generates formaldehyde and succinate. Participates in transcriptional repression of ASCL2 and E2F-responsive promoters via the recruitment of histone deacetylases and NCOR1, respectively. The protein is Lysine-specific demethylase 4A (Kdm4a) of Mus musculus (Mouse).